Reading from the N-terminus, the 338-residue chain is tRNA N6-adenosine threonylcarbamoyltransferase (338 aa).

Fe cation-binding residues include histidine 111 and histidine 115. Substrate-binding positions include 134-138, aspartate 167, glycine 180, and asparagine 272; that span reads LVSGG. Aspartate 300 contacts Fe cation.

It belongs to the KAE1 / TsaD family. It depends on Fe(2+) as a cofactor.

The protein resides in the cytoplasm. The catalysed reaction is L-threonylcarbamoyladenylate + adenosine(37) in tRNA = N(6)-L-threonylcarbamoyladenosine(37) in tRNA + AMP + H(+). In terms of biological role, required for the formation of a threonylcarbamoyl group on adenosine at position 37 (t(6)A37) in tRNAs that read codons beginning with adenine. Is involved in the transfer of the threonylcarbamoyl moiety of threonylcarbamoyl-AMP (TC-AMP) to the N6 group of A37, together with TsaE and TsaB. TsaD likely plays a direct catalytic role in this reaction. This Aliivibrio salmonicida (strain LFI1238) (Vibrio salmonicida (strain LFI1238)) protein is tRNA N6-adenosine threonylcarbamoyltransferase.